Reading from the N-terminus, the 90-residue chain is MANIKSSEKDIRRTKRRNAANSQNRSRLRTQAKKILKAIKEKDPKAAMALFIEYTSFLDKAAKTNLIHSKNADRKKSRMAKRLNAVSAAA.

Residues 1–11 show a composition bias toward basic and acidic residues; sequence MANIKSSEKDI. Disordered regions lie at residues 1–29 and 69–90; these read MANIKSSEKDIRRTKRRNAANSQNRSRLR and SKNADRKKSRMAKRLNAVSAAA.

This sequence belongs to the bacterial ribosomal protein bS20 family.

Functionally, binds directly to 16S ribosomal RNA. The protein is Small ribosomal subunit protein bS20 of Leptospira borgpetersenii serovar Hardjo-bovis (strain L550).